A 248-amino-acid chain; its full sequence is MDIVQSSIDTLNHFYEISGVEVGQHFYWQIGGFKVHAQVLITSWVVIAVLLGSATIAVRDPQTIPTGGQNFVEYVLGFVRDLTRTQIGEEEYGPWVPFIGTMFLFILVSNWSGALLPWKIIQLPHGELAAPTNDINTTVALALLTSVAYFYAGLAKKGLGYFGKYIQPTPVLLPINILEDFTKPLSLSFRLFGNILADELVVAVLVSLVPLVVPIPVMFLGLFTSAIQALIFATLAAAYIGESMEGHH.

5 helical membrane passes run 38-58, 96-116, 135-155, 200-220, and 221-241; these read QVLI…TIAV, VPFI…GALL, INTT…AGLA, LVVA…VMFL, and GLFT…AYIG.

It belongs to the ATPase A chain family. As to quaternary structure, F-type ATPases have 2 components, CF(1) - the catalytic core - and CF(0) - the membrane proton channel. CF(1) has five subunits: alpha(3), beta(3), gamma(1), delta(1), epsilon(1). CF(0) has four main subunits: a, b, b' and c.

It is found in the plastid. It localises to the chloroplast thylakoid membrane. Functionally, key component of the proton channel; it plays a direct role in the translocation of protons across the membrane. The protein is ATP synthase subunit a, chloroplastic of Cycas taitungensis (Prince sago).